The primary structure comprises 272 residues: Ribosomal RNA small subunit methyltransferase A (272 aa).

Residues N15, I17, G42, E64, D90, and N109 each coordinate S-adenosyl-L-methionine.

The protein belongs to the class I-like SAM-binding methyltransferase superfamily. rRNA adenine N(6)-methyltransferase family. RsmA subfamily.

It localises to the cytoplasm. The catalysed reaction is adenosine(1518)/adenosine(1519) in 16S rRNA + 4 S-adenosyl-L-methionine = N(6)-dimethyladenosine(1518)/N(6)-dimethyladenosine(1519) in 16S rRNA + 4 S-adenosyl-L-homocysteine + 4 H(+). Specifically dimethylates two adjacent adenosines (A1518 and A1519) in the loop of a conserved hairpin near the 3'-end of 16S rRNA in the 30S particle. May play a critical role in biogenesis of 30S subunits. The polypeptide is Ribosomal RNA small subunit methyltransferase A (Wolbachia sp. subsp. Drosophila simulans (strain wRi)).